Consider the following 224-residue polypeptide: 7-cyano-7-deazaguanine synthase (224 aa).

An ATP-binding site is contributed by 7 to 17; it reads LSGGLDSSTIL. Zn(2+)-binding residues include cysteine 191, cysteine 199, cysteine 202, and cysteine 205.

The protein belongs to the QueC family. Zn(2+) serves as cofactor.

The catalysed reaction is 7-carboxy-7-deazaguanine + NH4(+) + ATP = 7-cyano-7-deazaguanine + ADP + phosphate + H2O + H(+). The protein operates within purine metabolism; 7-cyano-7-deazaguanine biosynthesis. In terms of biological role, catalyzes the ATP-dependent conversion of 7-carboxy-7-deazaguanine (CDG) to 7-cyano-7-deazaguanine (preQ(0)). In Nostoc punctiforme (strain ATCC 29133 / PCC 73102), this protein is 7-cyano-7-deazaguanine synthase.